The sequence spans 906 residues: Kinesin-like protein KIN-7G (906 aa).

One can recognise a Kinesin motor domain in the interval 26–344; that stretch reads SVAVAVRFRP…LKFAHRAKHI (319 aa). Residue 105 to 112 participates in ATP binding; the sequence is GVTSSGKT. Coiled coils occupy residues 346–385, 733–814, and 839–875; these read IQATQNKIMDARSLIKKYQNEIRQLKEELEQLRRSIRTGT, SDEF…GRNQ, and GDMNALEAMLKEKDQRQAELHTKIEESKQKEAFLEKE. Positions 803–840 are disordered; that stretch reads RLSSELASGRNQRRGSHGPRGARRESHTKRYEPARRGD. A compositionally biased stretch (basic residues) spans 813–823; it reads NQRRGSHGPRG. Positions 824–840 are enriched in basic and acidic residues; the sequence is ARRESHTKRYEPARRGD.

It belongs to the TRAFAC class myosin-kinesin ATPase superfamily. Kinesin family. KIN-7 subfamily.

The chain is Kinesin-like protein KIN-7G from Oryza sativa subsp. japonica (Rice).